A 540-amino-acid polypeptide reads, in one-letter code: CBL-interacting protein kinase 12 (540 aa).

Residues methionine 1 to methionine 23 form a disordered region. Residues tyrosine 46–phenylalanine 300 form the Protein kinase domain. ATP contacts are provided by residues leucine 52–valine 60 and lysine 75. Aspartate 168 functions as the Proton acceptor in the catalytic mechanism. The tract at residues aspartate 186–glutamate 215 is activation loop. A compositionally biased stretch (pro residues) spans proline 333–glycine 348. The tract at residues proline 333–serine 380 is disordered. Over residues glycine 353–serine 364 the composition is skewed to low complexity. The region spanning serine 370–glutamate 406 is the NAF domain. The segment at glycine 409–valine 438 is PPI.

Belongs to the protein kinase superfamily. CAMK Ser/Thr protein kinase family. SNF1 subfamily. Mg(2+) is required as a cofactor. Autophosphorylated. In terms of tissue distribution, expressed at low levels in leaf blades.

The enzyme catalyses L-seryl-[protein] + ATP = O-phospho-L-seryl-[protein] + ADP + H(+). The catalysed reaction is L-threonyl-[protein] + ATP = O-phospho-L-threonyl-[protein] + ADP + H(+). Involved in drought stress tolerance. CIPK serine-threonine protein kinases interact with CBL proteins. Binding of a CBL protein to the regulatory NAF domain of CIPK protein lead to the activation of the kinase in a calcium-dependent manner. The sequence is that of CBL-interacting protein kinase 12 (CIPK12) from Oryza sativa subsp. japonica (Rice).